A 356-amino-acid polypeptide reads, in one-letter code: tRNA N6-adenosine threonylcarbamoyltransferase (356 aa).

2 residues coordinate Fe cation: His-115 and His-119. Substrate contacts are provided by residues 138 to 142 (LVSGG), Asp-171, Gly-184, and Asn-283. Position 311 (Asp-311) interacts with Fe cation.

The protein belongs to the KAE1 / TsaD family. Requires Fe(2+) as cofactor.

The protein localises to the cytoplasm. It carries out the reaction L-threonylcarbamoyladenylate + adenosine(37) in tRNA = N(6)-L-threonylcarbamoyladenosine(37) in tRNA + AMP + H(+). Functionally, required for the formation of a threonylcarbamoyl group on adenosine at position 37 (t(6)A37) in tRNAs that read codons beginning with adenine. Is involved in the transfer of the threonylcarbamoyl moiety of threonylcarbamoyl-AMP (TC-AMP) to the N6 group of A37, together with TsaE and TsaB. TsaD likely plays a direct catalytic role in this reaction. This Prochlorococcus marinus (strain AS9601) protein is tRNA N6-adenosine threonylcarbamoyltransferase.